A 304-amino-acid chain; its full sequence is E3 ubiquitin-protein ligase RNF144B (304 aa).

Residues 27–245 (PLVTCKLCLC…YDRGPCRNKL (219 aa)) are TRIAD supradomain. Zn(2+) is bound by residues cysteine 31, cysteine 34, cysteine 54, cysteine 57, cysteine 122, cysteine 127, cysteine 146, cysteine 149, cysteine 154, cysteine 157, histidine 162, cysteine 167, cysteine 194, and cysteine 197. Residues 31–81 (CKLCLCEQSLDKMTTLQECRCIFCTACLKQYMQLAIREGCGSPITCPDMVC) form an RING-type 1 zinc finger. Residues 102-167 (QLYQRLKFER…KDAWHAEVSC (66 aa)) form an IBR-type zinc finger. The RING-type 2; atypical zinc-finger motif lies at 194–223 (CPVCRVYIERNEGCAQMMCKNCKHTFCWYC). Cysteine 207 is a catalytic residue. Residues cysteine 212, cysteine 215, cysteine 220, cysteine 223, histidine 235, and cysteine 241 each contribute to the Zn(2+) site. The helical transmembrane segment at 259–279 (VVGILVGLGIIALVTSPLLLL) threads the bilayer.

The protein belongs to the RBR family. RNF144 subfamily. Interacts with UBE2L3, UBE2L6 and LCMT2, as well as with BAX. Interacts with TBK1; this interaction inhibits TBK1 phosphorylation and 'Lys-63'-linked polyubiquitination. Post-translationally, auto-ubiquitinated.

The protein localises to the mitochondrion membrane. Its subcellular location is the cytoplasm. The enzyme catalyses [E2 ubiquitin-conjugating enzyme]-S-ubiquitinyl-L-cysteine + [acceptor protein]-L-lysine = [E2 ubiquitin-conjugating enzyme]-L-cysteine + [acceptor protein]-N(6)-ubiquitinyl-L-lysine.. It functions in the pathway protein modification; protein ubiquitination. In terms of biological role, E3 ubiquitin-protein ligase which accepts ubiquitin from E2 ubiquitin-conjugating enzymes UBE2L3 and UBE2L6 in the form of a thioester and then directly transfers the ubiquitin to targeted substrates such as LCMT2, thereby promoting their degradation. Induces apoptosis via a p53/TP53-dependent but caspase-independent mechanism. Plays a crucial role in maintaining the genomic stability by controlling the degradation of multiple proteins involved in mitotic progression and DNA damage. Regulates epithelial homeostasis by mediating degradation of CDKN1A and isoform 2 of TP63. Plays a regulatory role in innate immunity by negatively regulating IRF3 activation and IFN-beta production. Mechanistically, inhibits TBK1 phosphorylation and 'Lys-63'-linked polyubiquitination independently of its E3 ligase activity. Alternatively, promotes 'Lys-27' and 'Lys-33'-linked ubiquitination of IFIH1/MDA5, promoting selective autophagic degradation of IFIH1/MDA5 to inhibit antiviral response. The protein is E3 ubiquitin-protein ligase RNF144B (RNF144B) of Bos taurus (Bovine).